We begin with the raw amino-acid sequence, 47 residues long: PhoP/PhoQ regulator MgrB (47 aa).

A helical transmembrane segment spans residues 6 to 26 (WVVLVVVVLACLLLWAQVFNM).

Belongs to the MgrB family. In terms of assembly, may form homooligomers. Probably interacts with the periplasmic domain of PhoQ.

Its subcellular location is the cell inner membrane. PhoP-regulated transcription is redox-sensitive, being activated when the periplasm becomes more reducing. MgrB acts between DsbA/DsbB and PhoP/PhoQ in this pathway. Represses PhoP/PhoQ signaling, possibly by binding to the periplasmic domain of PhoQ, altering its activity and that of downstream effector PhoP. This Escherichia coli O157:H7 protein is PhoP/PhoQ regulator MgrB.